Reading from the N-terminus, the 702-residue chain is Polyribonucleotide nucleotidyltransferase (702 aa).

Mg(2+)-binding residues include D485 and D491. A KH domain is found at 552-611 (PKTSTLQIDPEKIRDVIGAGGKVINKIIADTGVKIDIKEDGLVYVSSAESEGVKEAVKII). Positions 621–689 (GEIYLGKVTK…SQGRINLSRK (69 aa)) constitute an S1 motif domain.

It belongs to the polyribonucleotide nucleotidyltransferase family. Mg(2+) is required as a cofactor.

It localises to the cytoplasm. It carries out the reaction RNA(n+1) + phosphate = RNA(n) + a ribonucleoside 5'-diphosphate. Involved in mRNA degradation. Catalyzes the phosphorolysis of single-stranded polyribonucleotides processively in the 3'- to 5'-direction. This Clostridium perfringens (strain ATCC 13124 / DSM 756 / JCM 1290 / NCIMB 6125 / NCTC 8237 / Type A) protein is Polyribonucleotide nucleotidyltransferase.